Reading from the N-terminus, the 183-residue chain is MDNNKKKDFFYFKPSEEIEEEIIDCFMENPVDENMFNQQQQQLQNNHENLEINEEYHQTINEMEDMIFTYSNTNISNDTNLSDNNVSDLIKLEIYNSNNINNNIYNTNNSNTNTNYNNNNNNNNNNNNNNNNNNNKNNNNNNNNNNSNSKIKRRNSIILDNVGTIIRIDTTNISSTKKRRIFK.

The span at 105–149 shows a compositional bias: low complexity; that stretch reads YNTNNSNTNTNYNNNNNNNNNNNNNNNNNNNKNNNNNNNNNNSNS. The interval 105–151 is disordered; it reads YNTNNSNTNTNYNNNNNNNNNNNNNNNNNNNKNNNNNNNNNNSNSKI.

This is an uncharacterized protein from Dictyostelium discoideum (Social amoeba).